The chain runs to 326 residues: Vitamin B12 import system permease protein BtuC (326 aa).

Helical transmembrane passes span 19–39 (LSVL…LWIL), 61–81 (LAVL…QALF), 88–108 (PGLL…VLLG), 112–132 (LPNW…TLIL), 146–166 (LLAG…AIYF), 184–204 (GGVD…LLWI), 240–260 (GWMV…GLVI), 274–294 (VLLP…DIVA), and 302–322 (ELPI…WLLL).

Belongs to the binding-protein-dependent transport system permease family. FecCD subfamily. As to quaternary structure, the complex is composed of two ATP-binding proteins (BtuD), two transmembrane proteins (BtuC) and a solute-binding protein (BtuF).

The protein localises to the cell inner membrane. Functionally, part of the ABC transporter complex BtuCDF involved in vitamin B12 import. Involved in the translocation of the substrate across the membrane. This chain is Vitamin B12 import system permease protein BtuC, found in Escherichia coli O6:K15:H31 (strain 536 / UPEC).